A 425-amino-acid chain; its full sequence is Serine--tRNA ligase (425 aa).

An L-serine-binding site is contributed by 228–230 (TAE). 259–261 (RSE) serves as a coordination point for ATP. Glu282 provides a ligand contact to L-serine. 346 to 349 (EIAS) contributes to the ATP binding site. Ser382 is an L-serine binding site.

The protein belongs to the class-II aminoacyl-tRNA synthetase family. Type-1 seryl-tRNA synthetase subfamily. Homodimer. The tRNA molecule binds across the dimer.

It is found in the cytoplasm. The catalysed reaction is tRNA(Ser) + L-serine + ATP = L-seryl-tRNA(Ser) + AMP + diphosphate + H(+). The enzyme catalyses tRNA(Sec) + L-serine + ATP = L-seryl-tRNA(Sec) + AMP + diphosphate + H(+). Its pathway is aminoacyl-tRNA biosynthesis; selenocysteinyl-tRNA(Sec) biosynthesis; L-seryl-tRNA(Sec) from L-serine and tRNA(Sec): step 1/1. Its function is as follows. Catalyzes the attachment of serine to tRNA(Ser). Is also able to aminoacylate tRNA(Sec) with serine, to form the misacylated tRNA L-seryl-tRNA(Sec), which will be further converted into selenocysteinyl-tRNA(Sec). This Rickettsia canadensis (strain McKiel) protein is Serine--tRNA ligase.